The primary structure comprises 189 residues: UPF0301 protein CF0373 (189 aa).

This sequence belongs to the UPF0301 (AlgH) family.

In Chlamydia felis (strain Fe/C-56) (Chlamydophila felis), this protein is UPF0301 protein CF0373.